We begin with the raw amino-acid sequence, 192 residues long: Peptidyl-tRNA hydrolase (192 aa).

Residue Y14 coordinates tRNA. The Proton acceptor role is filled by H19. The tRNA site is built by Y64, N66, and N112.

This sequence belongs to the PTH family. Monomer.

Its subcellular location is the cytoplasm. The enzyme catalyses an N-acyl-L-alpha-aminoacyl-tRNA + H2O = an N-acyl-L-amino acid + a tRNA + H(+). Hydrolyzes ribosome-free peptidyl-tRNAs (with 1 or more amino acids incorporated), which drop off the ribosome during protein synthesis, or as a result of ribosome stalling. In terms of biological role, catalyzes the release of premature peptidyl moieties from peptidyl-tRNA molecules trapped in stalled 50S ribosomal subunits, and thus maintains levels of free tRNAs and 50S ribosomes. This Anaeromyxobacter sp. (strain K) protein is Peptidyl-tRNA hydrolase.